A 362-amino-acid chain; its full sequence is 3-isopropylmalate dehydrogenase (362 aa).

Residue 77-88 (GPKWGTGAVRPE) coordinates NAD(+). Substrate-binding residues include Arg-95, Arg-105, Arg-134, and Asp-223. Mg(2+)-binding residues include Asp-223, Asp-248, and Asp-252. Position 287 to 298 (287 to 298 (GSAPDLPKGKVN)) interacts with NAD(+).

The protein belongs to the isocitrate and isopropylmalate dehydrogenases family. In terms of assembly, homodimer. Mg(2+) serves as cofactor. Requires Mn(2+) as cofactor.

It localises to the cytoplasm. The enzyme catalyses (2R,3S)-3-isopropylmalate + NAD(+) = 4-methyl-2-oxopentanoate + CO2 + NADH. Its pathway is amino-acid biosynthesis; L-leucine biosynthesis; L-leucine from 3-methyl-2-oxobutanoate: step 3/4. Functionally, catalyzes the oxidation of 3-carboxy-2-hydroxy-4-methylpentanoate (3-isopropylmalate) to 3-carboxy-4-methyl-2-oxopentanoate. The product decarboxylates to 4-methyl-2 oxopentanoate. This chain is 3-isopropylmalate dehydrogenase (LEU2), found in Zygosaccharomyces bailii.